The sequence spans 225 residues: PKHD-type hydroxylase YbiX (225 aa).

Residues 78 to 177 (TLSTPLFNRY…RVASFMWIQS (100 aa)) enclose the Fe2OG dioxygenase domain. Residues His-96, Asp-98, and His-158 each coordinate Fe cation. 2-oxoglutarate is bound at residue Arg-168.

Requires Fe(2+) as cofactor. L-ascorbate serves as cofactor.

This is PKHD-type hydroxylase YbiX from Escherichia coli O81 (strain ED1a).